Here is a 79-residue protein sequence, read N- to C-terminus: UPF0180 protein BCG9842_B3897 (79 aa).

The protein belongs to the UPF0180 family.

The chain is UPF0180 protein BCG9842_B3897 from Bacillus cereus (strain G9842).